The chain runs to 364 residues: DNA polymerase IV (364 aa).

In terms of domain architecture, UmuC spans 14-198 (IIHIDMDAFF…LPIEKFHGVG (185 aa)). Residues Asp-18 and Asp-116 each coordinate Mg(2+). Residue Glu-117 is part of the active site.

The protein belongs to the DNA polymerase type-Y family. In terms of assembly, monomer. Requires Mg(2+) as cofactor.

The protein resides in the cytoplasm. The catalysed reaction is DNA(n) + a 2'-deoxyribonucleoside 5'-triphosphate = DNA(n+1) + diphosphate. Functionally, poorly processive, error-prone DNA polymerase involved in untargeted mutagenesis. Copies undamaged DNA at stalled replication forks, which arise in vivo from mismatched or misaligned primer ends. These misaligned primers can be extended by PolIV. Exhibits no 3'-5' exonuclease (proofreading) activity. May be involved in translesional synthesis, in conjunction with the beta clamp from PolIII. The sequence is that of DNA polymerase IV from Streptococcus pyogenes serotype M1.